We begin with the raw amino-acid sequence, 340 residues long: Galactoside alpha-(1,2)-fucosyltransferase 2 (340 aa).

The Cytoplasmic segment spans residues 1 to 7 (MLSMQAS). Residues 8–28 (FFFPTGPFILFVFTASTIFHL) traverse the membrane as a helical; Signal-anchor for type II membrane protein segment. At 29–340 (QQRMVKIQPT…EADLSPLLKH (312 aa)) the chain is on the lumenal side. 4 N-linked (GlcNAc...) asparagine glycosylation sites follow: N185, N251, N279, and N305.

The protein resides in the golgi apparatus. The protein localises to the golgi stack membrane. It catalyses the reaction a beta-D-galactosyl-(1-&gt;3)-N-acetyl-beta-D-glucosaminyl derivative + GDP-beta-L-fucose = an alpha-L-Fuc-(1-&gt;2)-beta-D-Gal-(1-&gt;3)-beta-D-GlcNAc derivative + GDP + H(+). The catalysed reaction is a beta-D-galactosyl-(1-&gt;4)-N-acetyl-beta-D-glucosaminyl derivative + GDP-beta-L-fucose = an alpha-L-Fuc-(1-&gt;2)-beta-D-Gal-(1-&gt;4)-beta-D-GlcNAc derivative + GDP + H(+). The enzyme catalyses a neolactoside nLc4Cer + GDP-beta-L-fucose = a neolactoside IV(2)-alpha-Fuc-nLc4Cer + GDP + H(+). It carries out the reaction a neolactoside nLc4Cer(d18:1(4E)) + GDP-beta-L-fucose = a neolactoside IV(2)-alpha-Fuc-nLc4Cer(d18:1(4E)) + GDP + H(+). It catalyses the reaction a ganglioside GM1 + GDP-beta-L-fucose = a ganglioside Fuc-GM1 + GDP + H(+). The catalysed reaction is a ganglioside GA1 + GDP-beta-L-fucose = a ganglioside Fuc-GA1 + GDP + H(+). The enzyme catalyses Lc4Cer + GDP-beta-L-fucose = alpha-L-fucosyl-(1-&gt;2)-beta-D-galactosyl-(1-&gt;3)-N-acetyl-beta-D-glucosaminyl-(1-&gt;3)-beta-D-galactosyl-(1-&gt;4)-beta-D-glucosyl-(1&lt;-&gt;1')-ceramide + GDP + H(+). It carries out the reaction a beta-D-Gal-(1-&gt;3)-beta-D-GlcNAc-(1-&gt;3)-beta-D-Gal-(1-&gt;4)-beta-D-Glc-(1&lt;-&gt;1')-Cer(d18:1(4E)) + GDP-beta-L-fucose = alpha-L-fucosyl-(1-&gt;2)- beta-D-galactosyl-(1-&gt;3)-N-acetyl-beta-D-glucosaminyl-(1-&gt;3)-beta-D-galactosyl-(1-&gt;4)-beta-D-glucosyl-(1&lt;-&gt;1')-N-acylsphing-4-enine + GDP + H(+). It catalyses the reaction a ganglioside GD1b + GDP-beta-L-fucose = a ganglioside Fuc-GD1b + GDP + H(+). The catalysed reaction is a ganglioside GM1 (d18:1(4E)) + GDP-beta-L-fucose = a ganglioside Fuc-GM1 (d18:1(4E)) + GDP + H(+). The enzyme catalyses a globoside GalGb4Cer (d18:1(4E)) + GDP-beta-L-fucose = a globoside Globo-H (d18:1(4E)) + GDP + H(+). It carries out the reaction a lactoside III(4)-a-Fuc-Lc4Cer + GDP-beta-L-fucose = a lactoside IV(2),III(4)-a-[Fuc]2-Lc4Cer + GDP + H(+). It catalyses the reaction beta-D-galactosyl-(1-&gt;3)-N-acetyl-D-galactosamine + GDP-beta-L-fucose = alpha-L-fucosyl-(1-&gt;2)-beta-D-galactosyl-(1-&gt;3)-N-acetyl-D-galactosamine + GDP + H(+). It participates in protein modification; protein glycosylation. Functionally, catalyzes the transfer of L-fucose, from a guanosine diphosphate-beta-L-fucose, to the terminal galactose on both O- and N-linked glycans chains of cell surface glycoproteins and glycolipids and the resulting epitope regulates several processes such as cell-cell interaction including host-microbe interaction, cell surface expression and cell proliferation. Preferentially fucosylates gangliosides GA1 and GM1 in the antrum, cecum and colon and in the female reproductive organs. Fucosylated host glycoproteins or glycolipids mediate interaction with intestinal microbiota influencing its composition. Creates a soluble precursor oligosaccharide FuC-alpha ((1,2)Galbeta-) called the H antigen which is an essential substrate for the final step in the soluble ABO blood group antigen synthesis pathway. In Sus scrofa (Pig), this protein is Galactoside alpha-(1,2)-fucosyltransferase 2.